Reading from the N-terminus, the 319-residue chain is tRNA uridine(34) hydroxylase (319 aa).

The region spanning 133–231 (EDPDSVVIDT…YLEDVSSENS (99 aa)) is the Rhodanese domain. Cys-191 (cysteine persulfide intermediate) is an active-site residue.

Belongs to the TrhO family.

The catalysed reaction is uridine(34) in tRNA + AH2 + O2 = 5-hydroxyuridine(34) in tRNA + A + H2O. Functionally, catalyzes oxygen-dependent 5-hydroxyuridine (ho5U) modification at position 34 in tRNAs. The sequence is that of tRNA uridine(34) hydroxylase from Prochlorococcus marinus (strain NATL1A).